Consider the following 82-residue polypeptide: Penaeidin-3g (82 aa).

An N-terminal signal peptide occupies residues 1 to 19 (MRLVVCLVFLASFALVCQG). Glutamine 20 is subject to Pyrrolidone carboxylic acid. Disulfide bonds link cysteine 51/cysteine 66, cysteine 55/cysteine 73, and cysteine 67/cysteine 74. The residue at position 81 (serine 81) is a Serine amide.

The protein belongs to the penaeidin family.

The protein resides in the cytoplasmic granule. Antibacterial and antifungal activity. Presents chitin-binding activity. This Penaeus vannamei (Whiteleg shrimp) protein is Penaeidin-3g.